The sequence spans 510 residues: MIYIIFSSIFAGFILGFLVRVFLGRLSLLDLEKNLKKVRVESQLEIENERRQIIANAKSQMLKEKNQQDRDIRDRKNEIVNLEKRLLQREETLDKRISALDKQQSRVDFKIKEFEQKEKVIREKEADLVKRLENISGLTREDARKIVIEKVEHESKRDAQVIINKSEQEAQLLADKVAKDILVSTMQRIVTEVSSEFTVASVELPNDEMKGRIIGKEGRNIRALETLIGADIIIDDTPEAVVISCFDPIRKELAKRTLERLVTDGRIHPARIEEVVYNVTNEINSIIQEEGEKVVFDLNIHGLDKRLIRGLGRLYFRSSYGQNVLSHSKETAIIGEILAKEMKLDPVVVKRACLLHDIGKGMESISDNSEGHAITGAELAQSCGESEIVVNAIAAHHNEVKPESLEAIVVQIADAISASRPGARRESLNNYINRLKRLEDIAYSFEGVQKCYAIQAGREVRIIVDNALINDEKSILLARDIAKKIEAEMRYPGKIKVTIIRETRVIEYAR.

A helical transmembrane segment spans residues 2-22 (IYIIFSSIFAGFILGFLVRVF). In terms of domain architecture, KH spans 198-258 (TVASVELPND…IRKELAKRTL (61 aa)). The HD domain occupies 324-419 (VLSHSKETAI…VQIADAISAS (96 aa)).

It belongs to the RNase Y family.

Its subcellular location is the cell membrane. In terms of biological role, endoribonuclease that initiates mRNA decay. This chain is Ribonuclease Y, found in Borreliella burgdorferi (strain ATCC 35210 / DSM 4680 / CIP 102532 / B31) (Borrelia burgdorferi).